The chain runs to 98 residues: NADH-ubiquinone oxidoreductase chain 4L (98 aa).

The next 3 membrane-spanning stretches (helical) occupy residues 1–21 (MTLTYMNIMLAFAISLLGMLT), 27–47 (VASLLCLEGMMMSLFIMATLI), and 61–81 (IILLVFAACETAVGLALLISI).

It belongs to the complex I subunit 4L family. Core subunit of respiratory chain NADH dehydrogenase (Complex I) which is composed of 45 different subunits.

It localises to the mitochondrion inner membrane. The catalysed reaction is a ubiquinone + NADH + 5 H(+)(in) = a ubiquinol + NAD(+) + 4 H(+)(out). In terms of biological role, core subunit of the mitochondrial membrane respiratory chain NADH dehydrogenase (Complex I) which catalyzes electron transfer from NADH through the respiratory chain, using ubiquinone as an electron acceptor. Part of the enzyme membrane arm which is embedded in the lipid bilayer and involved in proton translocation. The polypeptide is NADH-ubiquinone oxidoreductase chain 4L (MT-ND4L) (Macaca mulatta (Rhesus macaque)).